The sequence spans 224 residues: Lipoprotein-releasing system ATP-binding protein LolD (224 aa).

Residues 5-224 (LRAENIKKVI…GKVVGEITRV (220 aa)) form the ABC transporter domain. Residue 37–44 (GASGSGKS) participates in ATP binding.

Belongs to the ABC transporter superfamily. Lipoprotein translocase (TC 3.A.1.125) family. In terms of assembly, the complex is composed of two ATP-binding proteins (LolD) and two transmembrane proteins (LolC and LolE).

Its subcellular location is the cell inner membrane. In terms of biological role, part of the ABC transporter complex LolCDE involved in the translocation of mature outer membrane-directed lipoproteins, from the inner membrane to the periplasmic chaperone, LolA. Responsible for the formation of the LolA-lipoprotein complex in an ATP-dependent manner. This chain is Lipoprotein-releasing system ATP-binding protein LolD, found in Aquifex aeolicus (strain VF5).